The chain runs to 137 residues: Large ribosomal subunit protein uL16 (137 aa).

The protein belongs to the universal ribosomal protein uL16 family. Part of the 50S ribosomal subunit.

Functionally, binds 23S rRNA and is also seen to make contacts with the A and possibly P site tRNAs. The chain is Large ribosomal subunit protein uL16 from Streptococcus suis (strain 98HAH33).